We begin with the raw amino-acid sequence, 110 residues long: MPETHAILRGVRLSVDKGRLVADLIRGKKVDQALNILNFTQKKAAGIIRKVLESAIANAEHNDSADIDELKVKTIHVEQGTTLKRSAARAKGRGNRISKPTCHVYVTVGN.

The protein belongs to the universal ribosomal protein uL22 family. As to quaternary structure, part of the 50S ribosomal subunit.

This protein binds specifically to 23S rRNA; its binding is stimulated by other ribosomal proteins, e.g. L4, L17, and L20. It is important during the early stages of 50S assembly. It makes multiple contacts with different domains of the 23S rRNA in the assembled 50S subunit and ribosome. In terms of biological role, the globular domain of the protein is located near the polypeptide exit tunnel on the outside of the subunit, while an extended beta-hairpin is found that lines the wall of the exit tunnel in the center of the 70S ribosome. The polypeptide is Large ribosomal subunit protein uL22 (Verminephrobacter eiseniae (strain EF01-2)).